The following is a 292-amino-acid chain: Sulfofructosephosphate aldolase (292 aa).

K193 serves as the catalytic Schiff-base intermediate with substrate.

Belongs to the aldolase LacD family. Homotetramer.

The enzyme catalyses 6-deoxy-6-sulfo-D-fructose 1-phosphate = (2S)-3-sulfolactaldehyde + dihydroxyacetone phosphate. Cleaves 6-deoxy-6-sulfo-D-fructose 1-phosphate (SFP) to form dihydroxyacetone phosphate (DHAP) and 3-sulfolactaldehyde (SLA). Can also catalyze the reverse reaction. This is Sulfofructosephosphate aldolase (yihT) from Salmonella typhimurium (strain LT2 / SGSC1412 / ATCC 700720).